Here is a 79-residue protein sequence, read N- to C-terminus: Acyl carrier protein (79 aa).

The 76-residue stretch at 2–77 (SDTAERVKKI…DAIDFINQKT (76 aa)) folds into the Carrier domain. Residue Ser-37 is modified to O-(pantetheine 4'-phosphoryl)serine.

Belongs to the acyl carrier protein (ACP) family. 4'-phosphopantetheine is transferred from CoA to a specific serine of apo-ACP by AcpS. This modification is essential for activity because fatty acids are bound in thioester linkage to the sulfhydryl of the prosthetic group.

The protein resides in the cytoplasm. It participates in lipid metabolism; fatty acid biosynthesis. Carrier of the growing fatty acid chain in fatty acid biosynthesis. The polypeptide is Acyl carrier protein (Rhodospirillum centenum (strain ATCC 51521 / SW)).